Reading from the N-terminus, the 92-residue chain is DNA-directed RNA polymerase subunit omega (92 aa).

This sequence belongs to the RNA polymerase subunit omega family. In terms of assembly, the RNAP catalytic core consists of 2 alpha, 1 beta, 1 beta' and 1 omega subunit. When a sigma factor is associated with the core the holoenzyme is formed, which can initiate transcription.

It catalyses the reaction RNA(n) + a ribonucleoside 5'-triphosphate = RNA(n+1) + diphosphate. Functionally, promotes RNA polymerase assembly. Latches the N- and C-terminal regions of the beta' subunit thereby facilitating its interaction with the beta and alpha subunits. This is DNA-directed RNA polymerase subunit omega from Shewanella denitrificans (strain OS217 / ATCC BAA-1090 / DSM 15013).